The sequence spans 185 residues: Flavodoxin (185 aa).

The Flavodoxin-like domain maps to 4 to 159 (VLVIYDTRTG…ACRRLGRRLA (156 aa)).

It belongs to the flavodoxin family. The cofactor is FMN.

Its function is as follows. Low-potential electron donor to a number of redox enzymes. The protein is Flavodoxin (fldA) of Aquifex aeolicus (strain VF5).